The primary structure comprises 562 residues: Protein KASH5 (562 aa).

The Cytoplasmic segment spans residues Met1–Pro521. Positions Ala125 to Arg153 are disordered. A coiled-coil region spans residues Ser164–Glu349. Positions Glu407–Pro481 are disordered. Positions Ala431–Glu448 are enriched in basic and acidic residues. A helical; Anchor for type IV membrane protein membrane pass occupies residues Leu522–Gly542. Residues Leu541–Val562 are interaction with SUN1. Topologically, residues Pro543–Val562 are perinuclear space.

Core component the LINC complex which is composed of inner nuclear membrane SUN domain-containing proteins coupled to outer nuclear membrane KASH domain-containing nesprins. SUN and KASH domain-containing proteins seem to bind each other promiscuously; however, differentially expression of LINC complex constituents is giving rise to specific assemblies. At least SUN1/2-containing core LINC complexes are proposed to be hexameric composed of three protomers of each KASH and SUN domain-containing protein. Interacts with SUN1; this interaction mediates its telomere localization by forming a SUN1:KASH5 LINC complex. Component of a probable SUN2:KASH5 LINC complex. Self-associates. Interacts with DYNC1H1, DCTN1, DYNC1I1/2 and PAFAH1B1; suggesting the association with the dynein-dynactin motor complex. As to expression, expressed in testis (at protein level).

It is found in the nucleus outer membrane. It localises to the nucleus. The protein localises to the chromosome. Its subcellular location is the telomere. The protein resides in the nucleus envelope. As a component of the LINC (LInker of Nucleoskeleton and Cytoskeleton) complex, involved in the connection between the nuclear lamina and the cytoskeleton. The nucleocytoplasmic interactions established by the LINC complex play an important role in the transmission of mechanical forces across the nuclear envelope and in nuclear movement and positioning. Required for telomere attachment to nuclear envelope in the prophase of meiosis. Required for rapid telomere prophase movements implicating a SUN1/2:KASH5 LINC complex in which SUN1 and SUN2 seem to act at least partial redundantly. Required for homolog pairing during meiotic prophase in spermatocytes and probably oocytes. Essential for male and female gametogenesis. Recruits cytoplasmic dynein to telomere attachment sites at the nuclear envelope in spermatocytes. In oocytes is involved in meiotic resumption and spindle formation. The polypeptide is Protein KASH5 (Homo sapiens (Human)).